The chain runs to 105 residues: DNA-directed RNA polymerase RPB9 homolog (105 aa).

7 residues coordinate Zn(2+): C4, C7, C24, C26, C73, C76, and C96. The C4-type; atypical zinc-finger motif lies at 4-26 (CKACSSCMVRTYVDGNIIFRCSC).

It belongs to the Asfivirus DNA-directed RNA polymerase RPB9 homolog family. As to quaternary structure, part of the viral DNA-directed RNA polymerase that consists of 8 polII-like subunits (RPB1, RPB2, RPB3, RPB5, RPB6, RPB7, RPB9, RPB10), a capping enzyme and a termination factor.

The protein resides in the host cytoplasm. In terms of biological role, component of the DNA-directed RNA polymerase (RNAP) that catalyzes the transcription in the cytoplasm of viral DNA into RNA using the four ribonucleoside triphosphates as substrates. This African swine fever virus (isolate Pig/Kenya/KEN-50/1950) (ASFV) protein is DNA-directed RNA polymerase RPB9 homolog.